The primary structure comprises 564 residues: Copine-8 (564 aa).

C2 domains follow at residues 1-133 (MDSR…RLEK) and 142-265 (KCGT…FNVY). Ca(2+) is bound by residues Asp39, Asp45, Asp99, Asp101, Ser104, Lys109, Asp111, Asp173, Asp179, Asp235, Asp237, and Asp243. Residue Ser260 is modified to Phosphoserine. The VWFA domain maps to 309 to 510 (NFTVAIDFTA…VQFVPFRDYI (202 aa)).

It belongs to the copine family. Ca(2+) serves as cofactor.

Functionally, probable calcium-dependent phospholipid-binding protein that may play a role in calcium-mediated intracellular processes. The protein is Copine-8 of Homo sapiens (Human).